Consider the following 353-residue polypeptide: Peptide methionine sulfoxide reductase MsrA/MsrB (353 aa).

The segment at 43 to 196 is peptide methionine sulfoxide reductase A; it reads REIYLAGGCF…PNGYCHIDIT (154 aa). Cysteine 51 is a catalytic residue. The MsrB domain maps to 213-336; the sequence is DAELKAKLTP…NSASIKFIPL (124 aa). Cysteine 325 (nucleophile) is an active-site residue.

In the N-terminal section; belongs to the MsrA Met sulfoxide reductase family. The protein in the C-terminal section; belongs to the MsrB Met sulfoxide reductase family.

The catalysed reaction is L-methionyl-[protein] + [thioredoxin]-disulfide + H2O = L-methionyl-(S)-S-oxide-[protein] + [thioredoxin]-dithiol. The enzyme catalyses [thioredoxin]-disulfide + L-methionine + H2O = L-methionine (S)-S-oxide + [thioredoxin]-dithiol. It catalyses the reaction L-methionyl-[protein] + [thioredoxin]-disulfide + H2O = L-methionyl-(R)-S-oxide-[protein] + [thioredoxin]-dithiol. In terms of biological role, has an important function as a repair enzyme for proteins that have been inactivated by oxidation. Catalyzes the reversible oxidation-reduction of methionine sulfoxide in proteins to methionine. The sequence is that of Peptide methionine sulfoxide reductase MsrA/MsrB (msrAB) from Haemophilus influenzae (strain ATCC 51907 / DSM 11121 / KW20 / Rd).